Reading from the N-terminus, the 202-residue chain is Probable nicotinate-nucleotide adenylyltransferase (202 aa).

This sequence belongs to the NadD family.

The catalysed reaction is nicotinate beta-D-ribonucleotide + ATP + H(+) = deamido-NAD(+) + diphosphate. It participates in cofactor biosynthesis; NAD(+) biosynthesis; deamido-NAD(+) from nicotinate D-ribonucleotide: step 1/1. Catalyzes the reversible adenylation of nicotinate mononucleotide (NaMN) to nicotinic acid adenine dinucleotide (NaAD). This is Probable nicotinate-nucleotide adenylyltransferase from Clostridium perfringens (strain SM101 / Type A).